The following is a 92-amino-acid chain: Small ribosomal subunit protein uS19 (92 aa).

Belongs to the universal ribosomal protein uS19 family.

In terms of biological role, protein S19 forms a complex with S13 that binds strongly to the 16S ribosomal RNA. This is Small ribosomal subunit protein uS19 from Picosynechococcus sp. (strain ATCC 27264 / PCC 7002 / PR-6) (Agmenellum quadruplicatum).